Consider the following 204-residue polypeptide: Large ribosomal subunit protein eL15 (204 aa).

Residue glycine 2 is the site of N-myristoyl glycine attachment. Serine 34 is modified (phosphoserine). Residue lysine 83 forms a Glycyl lysine isopeptide (Lys-Gly) (interchain with G-Cter in SUMO2) linkage. Phosphoserine is present on residues serine 97 and serine 100. Residues 165 to 186 (TSAGRKSRGLGKGHKFHHTIGG) are disordered. Over residues 169-182 (RKSRGLGKGHKFHH) the composition is skewed to basic residues.

Belongs to the eukaryotic ribosomal protein eL15 family. In terms of assembly, component of the large ribosomal subunit. Interacts with IFIT1 (via TPR repeats 1-4).

It localises to the cytoplasm. In terms of biological role, component of the large ribosomal subunit. The ribosome is a large ribonucleoprotein complex responsible for the synthesis of proteins in the cell. The polypeptide is Large ribosomal subunit protein eL15 (RPL15) (Bos taurus (Bovine)).